Here is a 502-residue protein sequence, read N- to C-terminus: MMHSVSRLARRFCATLATATAEISGEAAASVPTKAKKHRSIYKKLSSLGTRGGGKMEETLNQFVMEGVPVKKHDLIRYAKDLRKFRQPQRALEIFEWMERKEIAFTGSDHAIRLNLIAKSKGLEAAETYFNSLDDSIKNQSTYGSLLNCYCVEKEEVKAKAHFENMVDLNHVSNSLPFNNLMAMYMGLGQPEKVPALVVAMKEKSITPCDITYSMWIQSCGSLKDLDGVEKVLDEMKAEGEGIFSWNTFANLAAIYIKVGLYGKAEEALKSLENNMNPDVRDCYHFLINLYTGIANASEVYRVWDLLKKRYPNVNNSSYLTMLRALSKLDDIDGVKKVFAEWESTCWTYDMRMANVAISSYLKQNMYEEAEAVFNGAMKKCKGQFSKARQLLMMHLLKNDQADLALKHFEAAVLDQDKNWTWSSELISSFFLHFEEAKDVDGAEEFCKTLTKWSPLSSETYTLLMKTYLAAGKACPDMKKRLEEQGILVDEEQECLLSKICP.

Residues 1-13 constitute a mitochondrion transit peptide; it reads MMHSVSRLARRFC. 7 PPR repeats span residues 139–173, 174–208, 209–243, 245–275, 280–310, 315–345, and 350–381; these read NQST…NHVS, NSLP…SITP, CDIT…GEGI, SWNT…LENN, VRDC…LKKR, NNSS…WEST, and DMRM…MKKC.

It belongs to the PPR family. P subfamily.

It localises to the mitochondrion. The polypeptide is Pentatricopeptide repeat-containing protein At4g01990, mitochondrial (Arabidopsis thaliana (Mouse-ear cress)).